Consider the following 151-residue polypeptide: Transcriptional regulator MraZ (151 aa).

2 SpoVT-AbrB domains span residues 5 to 52 (ANAI…PLDE) and 81 to 124 (AVDL…DEDA).

The protein belongs to the MraZ family. In terms of assembly, forms oligomers.

The protein resides in the cytoplasm. Its subcellular location is the nucleoid. The chain is Transcriptional regulator MraZ from Pseudomonas fluorescens (strain ATCC BAA-477 / NRRL B-23932 / Pf-5).